Consider the following 235-residue polypeptide: Protein shisa-5 (235 aa).

An N-terminal signal peptide occupies residues 1–26; that stretch reads MAAPAPSLWTLLLLLLLLPPPPGAHG. Residues 27–105 lie on the Extracellular side of the membrane; sequence ELCRPFGEDN…SSFDSDPMSG (79 aa). The chain crosses the membrane as a helical span at residues 106–126; sequence FGATVAIGVTIFVVFIATIII. Residues 127–235 lie on the Cytoplasmic side of the membrane; the sequence is CFTCSCCCLY…TYMDSLKTIP (109 aa). Positions 157–235 are disordered; sequence APYPQPQPQP…TYMDSLKTIP (79 aa). Composition is skewed to pro residues over residues 159–172 and 181–211; these read YPQPQPQPVAPSYP and PMPPQPGMPAAPYPTQYPPPYLAQPTGPPPY.

It belongs to the shisa family. In terms of assembly, interacts with PDCD6; PDCD6 can stabilize SHISA5. In terms of tissue distribution, spleen and thymus.

The protein resides in the endoplasmic reticulum membrane. It localises to the nucleus membrane. Its function is as follows. Can induce apoptosis in a caspase-dependent manner and plays a role in p53/TP53-dependent apoptosis. The chain is Protein shisa-5 (Shisa5) from Mus musculus (Mouse).